Reading from the N-terminus, the 601-residue chain is Methionine--tRNA ligase (601 aa).

Positions 21-31 (PYANGPRHIGH) match the 'HIGH' region motif. Residues cysteine 153, cysteine 156, cysteine 166, and cysteine 169 each contribute to the Zn(2+) site. Residue asparagine 361 participates in ATP binding.

It belongs to the class-I aminoacyl-tRNA synthetase family. MetG type 1 subfamily. In terms of assembly, monomer. Zn(2+) is required as a cofactor.

The protein localises to the cytoplasm. The catalysed reaction is tRNA(Met) + L-methionine + ATP = L-methionyl-tRNA(Met) + AMP + diphosphate. Functionally, is required not only for elongation of protein synthesis but also for the initiation of all mRNA translation through initiator tRNA(fMet) aminoacylation. This Cutibacterium acnes (strain DSM 16379 / KPA171202) (Propionibacterium acnes) protein is Methionine--tRNA ligase.